The chain runs to 107 residues: uncharacterized protein (107 aa).

Residues 1 to 14 (MTERNASGRMNTKG) are compositionally biased toward polar residues. The tract at residues 1 to 20 (MTERNASGRMNTKGRSIKET) is disordered.

Its subcellular location is the mitochondrion. This is an uncharacterized protein from Arabidopsis thaliana (Mouse-ear cress).